The following is a 259-amino-acid chain: Steroidogenic acute regulatory-like protein 1 (259 aa).

The first 20 residues, 1 to 20 (MTLLPFTCLILLYSLGSVMS), serve as a signal peptide directing secretion. The START domain maps to 43–254 (YATALKTCGE…NRRHFQNLKA (212 aa)).

In Caenorhabditis elegans, this protein is Steroidogenic acute regulatory-like protein 1 (strl-1).